Here is a 386-residue protein sequence, read N- to C-terminus: L-prolyl-[peptidyl-carrier protein] dehydrogenase (386 aa).

FAD contacts are provided by residues 125 to 134 (NAATEPDAGS) and 158 to 160 (FIT). The active-site Proton acceptor is the Glu-244. FAD is bound by residues Arg-270, Gln-281, 338–342 (QTFGG), and 367–369 (TND).

This sequence belongs to the acyl-CoA dehydrogenase family. It depends on FAD as a cofactor.

The catalysed reaction is L-prolyl-[peptidyl-carrier protein] + 2 oxidized [electron-transfer flavoprotein] + H(+) = (1H-pyrrole-2-carbonyl)-[peptidyl-carrier protein] + 2 reduced [electron-transfer flavoprotein]. It functions in the pathway antibiotic biosynthesis; prodigiosin biosynthesis. Its function is as follows. Involved in the biosynthesis of 4-methoxy-2,2'-bipyrrole-5-carbaldehyde (MBC), one of the terminal products involved in the biosynthesis of the red antibiotic prodigiosin (Pig). Catalyzes the desaturation of the L-prolyl-[PigG] to yield 1H-pyrrole-2-carbonyl-[PigG]. The chain is L-prolyl-[peptidyl-carrier protein] dehydrogenase from Serratia sp. (strain ATCC 39006) (Prodigiosinella confusarubida).